Reading from the N-terminus, the 222-residue chain is C-8 sterol isomerase ERG2 (222 aa).

A helical transmembrane segment spans residues Phe-3–Thr-23.

It belongs to the ERG2 family.

The protein localises to the endoplasmic reticulum membrane. The enzyme catalyses fecosterol = episterol. Its pathway is steroid metabolism; ergosterol biosynthesis; ergosterol from zymosterol: step 2/5. Its activity is regulated as follows. Catalytic activity is inhibited by the morphilines tridemorph, fenpropimorph, and fenpropidin. Its function is as follows. C-8 sterol isomerase; part of the third module of ergosterol biosynthesis pathway that includes the late steps of the pathway. ERG2 catalyzes the reaction which results in unsaturation at C-7 in the B ring of sterols and thus converts fecosterol to episterol. The third module or late pathway involves the ergosterol synthesis itself through consecutive reactions that mainly occur in the endoplasmic reticulum (ER) membrane. Firstly, the squalene synthase ERG9 catalyzes the condensation of 2 farnesyl pyrophosphate moieties to form squalene, which is the precursor of all steroids. Squalene synthase is crucial for balancing the incorporation of farnesyl diphosphate (FPP) into sterol and nonsterol isoprene synthesis. Secondly, the squalene epoxidase ERG1 catalyzes the stereospecific oxidation of squalene to (S)-2,3-epoxysqualene, which is considered to be a rate-limiting enzyme in steroid biosynthesis. Then, the lanosterol synthase ERG7 catalyzes the cyclization of (S)-2,3 oxidosqualene to lanosterol, a reaction that forms the sterol core. In the next steps, lanosterol is transformed to zymosterol through a complex process involving various demethylation, reduction and desaturation reactions. The lanosterol 14-alpha-demethylase ERG11 (also known as CYP51) catalyzes C14-demethylation of lanosterol to produce 4,4'-dimethyl cholesta-8,14,24-triene-3-beta-ol, which is critical for ergosterol biosynthesis. The C-14 reductase ERG24 reduces the C14=C15 double bond of 4,4-dimethyl-cholesta-8,14,24-trienol to produce 4,4-dimethyl-cholesta-8,24-dienol. 4,4-dimethyl-cholesta-8,24-dienol is substrate of the C-4 demethylation complex ERG25-ERG26-ERG27 in which ERG25 catalyzes the three-step monooxygenation required for the demethylation of 4,4-dimethyl and 4alpha-methylsterols, ERG26 catalyzes the oxidative decarboxylation that results in a reduction of the 3-beta-hydroxy group at the C-3 carbon to an oxo group, and ERG27 is responsible for the reduction of the keto group on the C-3. ERG28 has a role as a scaffold to help anchor ERG25, ERG26 and ERG27 to the endoplasmic reticulum and ERG29 regulates the activity of the iron-containing C4-methylsterol oxidase ERG25. Then, the sterol 24-C-methyltransferase ERG6 catalyzes the methyl transfer from S-adenosyl-methionine to the C-24 of zymosterol to form fecosterol. The C-8 sterol isomerase ERG2 catalyzes the reaction which results in unsaturation at C-7 in the B ring of sterols and thus converts fecosterol to episterol. The sterol-C5-desaturase ERG3 then catalyzes the introduction of a C-5 double bond in the B ring to produce 5-dehydroepisterol. The C-22 sterol desaturase ERG5 further converts 5-dehydroepisterol into ergosta-5,7,22,24(28)-tetraen-3beta-ol by forming the C-22(23) double bond in the sterol side chain. Finally, ergosta-5,7,22,24(28)-tetraen-3beta-ol is substrate of the C-24(28) sterol reductase ERG4 to produce ergosterol. The protein is C-8 sterol isomerase ERG2 of Saccharomyces cerevisiae (strain ATCC 204508 / S288c) (Baker's yeast).